The primary structure comprises 209 residues: Uracil phosphoribosyltransferase (209 aa).

Residues R79, R104, and 131–139 (DPMLATGAS) each bind 5-phospho-alpha-D-ribose 1-diphosphate. Uracil contacts are provided by residues I194 and 199 to 201 (GDA). D200 contributes to the 5-phospho-alpha-D-ribose 1-diphosphate binding site.

Belongs to the UPRTase family. Requires Mg(2+) as cofactor.

It catalyses the reaction UMP + diphosphate = 5-phospho-alpha-D-ribose 1-diphosphate + uracil. It participates in pyrimidine metabolism; UMP biosynthesis via salvage pathway; UMP from uracil: step 1/1. Allosterically activated by GTP. Functionally, catalyzes the conversion of uracil and 5-phospho-alpha-D-ribose 1-diphosphate (PRPP) to UMP and diphosphate. This Staphylococcus carnosus (strain TM300) protein is Uracil phosphoribosyltransferase.